A 99-amino-acid chain; its full sequence is Ubiquitin-related modifier 1 homolog (99 aa).

Gly-99 is modified (1-thioglycine). Gly-99 is covalently cross-linked (Glycyl lysine isopeptide (Gly-Lys) (interchain with K-? in acceptor proteins)).

Belongs to the URM1 family. In terms of processing, C-terminal thiocarboxylation occurs in 2 steps, it is first acyl-adenylated (-COAMP) via the hesA/moeB/thiF part of the MOCS3 homolog, then thiocarboxylated (-COSH) via the rhodanese domain of the MOCS3 homolog.

It localises to the cytoplasm. Its pathway is tRNA modification; 5-methoxycarbonylmethyl-2-thiouridine-tRNA biosynthesis. Its function is as follows. Acts as a sulfur carrier required for 2-thiolation of mcm(5)S(2)U at tRNA wobble positions of cytosolic tRNA(Lys), tRNA(Glu) and tRNA(Gln). Serves as sulfur donor in tRNA 2-thiolation reaction by being thiocarboxylated (-COSH) at its C-terminus by MOCS3. The sulfur is then transferred to tRNA to form 2-thiolation of mcm(5)S(2)U. Also acts as a ubiquitin-like protein (UBL) that is covalently conjugated via an isopeptide bond to lysine residues of target proteins. The thiocarboxylated form serves as substrate for conjugation and oxidative stress specifically induces the formation of UBL-protein conjugates. This Chlamydomonas reinhardtii (Chlamydomonas smithii) protein is Ubiquitin-related modifier 1 homolog.